We begin with the raw amino-acid sequence, 470 residues long: L-seryl-tRNA(Sec) selenium transferase (470 aa).

Lys-292 is subject to N6-(pyridoxal phosphate)lysine.

The protein belongs to the SelA family. Requires pyridoxal 5'-phosphate as cofactor.

The protein localises to the cytoplasm. It carries out the reaction L-seryl-tRNA(Sec) + selenophosphate + H(+) = L-selenocysteinyl-tRNA(Sec) + phosphate. Its pathway is aminoacyl-tRNA biosynthesis; selenocysteinyl-tRNA(Sec) biosynthesis; selenocysteinyl-tRNA(Sec) from L-seryl-tRNA(Sec) (bacterial route): step 1/1. Converts seryl-tRNA(Sec) to selenocysteinyl-tRNA(Sec) required for selenoprotein biosynthesis. The sequence is that of L-seryl-tRNA(Sec) selenium transferase from Moorella thermoacetica (strain ATCC 39073 / JCM 9320).